Reading from the N-terminus, the 537-residue chain is Tripeptidyl aminopeptidase (537 aa).

Positions 1 to 36 (MRKSSIRRRATAFGTAGALVTATLIAGAVSAPAASA) are cleaved as a signal peptide. Positions 37–39 (APA) are excised as a propeptide. Residues 119–497 (GALIYNPGGP…SRLITERDAG (379 aa)) enclose the AB hydrolase-1 domain. The active-site Nucleophile is serine 245. Residue aspartate 470 is part of the active site. Residue histidine 499 is the Proton donor of the active site.

Belongs to the peptidase S33 family.

It localises to the secreted. Cleaves tripeptides from the N-termini of proteins. Does not cleave mono- or dipeptides, or N-terminally blocked peptides. The protein is Tripeptidyl aminopeptidase of Streptomyces lividans.